A 435-amino-acid polypeptide reads, in one-letter code: Type A flavoprotein fprA (435 aa).

The tract at residues 48-228 (ANGTTYNAYA…PFRSFVAQAL (181 aa)) is zinc metallo-hydrolase. Fe cation contacts are provided by H98, E100, D102, H167, D186, and H243. The region spanning 276 to 415 (LLIFYVSAYG…EGRAFGRRLA (140 aa)) is the Flavodoxin-like domain.

In the N-terminal section; belongs to the zinc metallo-hydrolase group 3 family. Homodimer. The cofactor is FMN. Fe cation is required as a cofactor.

In terms of biological role, low-potential electron donor to a number of redox enzymes. The protein is Type A flavoprotein fprA (fprA) of Rhodobacter capsulatus (strain ATCC BAA-309 / NBRC 16581 / SB1003).